Here is a 489-residue protein sequence, read N- to C-terminus: Probable guanine deaminase (489 aa).

Positions 100 and 102 each coordinate Zn(2+). Substrate-binding positions include 102-105 (HVSQ), 231-232 (RF), 258-261 (HLSE), and Asp-348. Zn(2+)-binding residues include His-258 and Asp-348.

This sequence belongs to the metallo-dependent hydrolases superfamily. ATZ/TRZ family. The cofactor is Zn(2+).

The protein localises to the cytoplasm. It catalyses the reaction guanine + H2O + H(+) = xanthine + NH4(+). Its pathway is purine metabolism; guanine degradation; xanthine from guanine: step 1/1. Catalyzes the hydrolytic deamination of guanine, producing xanthine and ammonia. In Saccharomyces cerevisiae (strain ATCC 204508 / S288c) (Baker's yeast), this protein is Probable guanine deaminase (GUD1).